The chain runs to 66 residues: MVKKALIVILILLPFVQLALLPLVNRIEPIMFGLPFFHFWLLLWIIVTPLCSFGIYQMQKKDGGLE.

2 consecutive transmembrane segments (helical) span residues 5–25 (ALIV…PLVN) and 30–50 (IMFG…VTPL).

The protein resides in the cell membrane. This is an uncharacterized protein from Bacillus subtilis (strain 168).